The primary structure comprises 307 residues: Transcriptional repressor scratch 2 (307 aa).

The segment at 1-20 is SNAG domain; it reads MPRSFLVKKIKGDGFQCSGV. Disordered stretches follow at residues 34 to 90 and 116 to 148; these read LPGA…PQSS and GRSR…AGAQ. A compositionally biased stretch (gly residues) spans 124–148; the sequence is GGGGDAGGSGDAGGAGGRAGRAGAQ. C2H2-type zinc fingers lie at residues 155–177, 186–208, 212–234, and 240–262; these read HACA…KQTH, RKCP…LLTH, HKCG…MRSH, and FGCA…MQTH. The C2H2-type 5; atypical zinc-finger motif lies at 268–291; sequence YRCRQCDKSFALKSYLHKHCEAAC.

It belongs to the snail C2H2-type zinc-finger protein family.

It localises to the nucleus. May be involved in transcriptional regulation. The chain is Transcriptional repressor scratch 2 (SCRT2) from Homo sapiens (Human).